Here is a 292-residue protein sequence, read N- to C-terminus: Elongation factor Ts (292 aa).

The tract at residues Thr-80 to Val-83 is involved in Mg(2+) ion dislocation from EF-Tu.

The protein belongs to the EF-Ts family.

It is found in the cytoplasm. Its function is as follows. Associates with the EF-Tu.GDP complex and induces the exchange of GDP to GTP. It remains bound to the aminoacyl-tRNA.EF-Tu.GTP complex up to the GTP hydrolysis stage on the ribosome. This Cupriavidus metallidurans (strain ATCC 43123 / DSM 2839 / NBRC 102507 / CH34) (Ralstonia metallidurans) protein is Elongation factor Ts.